The sequence spans 399 residues: Enoyl-[acyl-carrier-protein] reductase [NADH] (399 aa).

Residues 49–54 (GASSGY), 75–76 (FE), 112–113 (DA), and 141–142 (LA) contribute to the NAD(+) site. Tyr-227 serves as a coordination point for substrate. Tyr-237 acts as the Proton donor in catalysis. NAD(+) is bound by residues Lys-246 and 272 to 274 (VVT).

Belongs to the TER reductase family. In terms of assembly, monomer.

It carries out the reaction a 2,3-saturated acyl-[ACP] + NAD(+) = a (2E)-enoyl-[ACP] + NADH + H(+). It functions in the pathway lipid metabolism; fatty acid biosynthesis. Involved in the final reduction of the elongation cycle of fatty acid synthesis (FAS II). Catalyzes the reduction of a carbon-carbon double bond in an enoyl moiety that is covalently linked to an acyl carrier protein (ACP). The chain is Enoyl-[acyl-carrier-protein] reductase [NADH] from Pseudomonas putida (strain W619).